A 482-amino-acid chain; its full sequence is UDP-N-acetylmuramate--L-alanine ligase (482 aa).

Position 123–129 (123–129) interacts with ATP; the sequence is GTHGKTT.

It belongs to the MurCDEF family.

It localises to the cytoplasm. It carries out the reaction UDP-N-acetyl-alpha-D-muramate + L-alanine + ATP = UDP-N-acetyl-alpha-D-muramoyl-L-alanine + ADP + phosphate + H(+). It functions in the pathway cell wall biogenesis; peptidoglycan biosynthesis. In terms of biological role, cell wall formation. The chain is UDP-N-acetylmuramate--L-alanine ligase from Pseudomonas putida (strain W619).